We begin with the raw amino-acid sequence, 58 residues long: uncharacterized protein (58 aa).

Its subcellular location is the plastid. The protein resides in the chloroplast. This is an uncharacterized protein from Porphyra purpurea (Red seaweed).